We begin with the raw amino-acid sequence, 408 residues long: Energy-coupling factor transporter ATP-binding protein EcfA1 (408 aa).

The ABC transporter domain maps to 140–374 (IEIKNLSFKY…KEFLRNIQLD (235 aa)). 174–181 (GHNGSGKS) contributes to the ATP binding site.

It belongs to the ABC transporter superfamily. Energy-coupling factor EcfA family. In terms of assembly, forms a stable energy-coupling factor (ECF) transporter complex composed of 2 membrane-embedded substrate-binding proteins (S component), 2 ATP-binding proteins (A component) and 2 transmembrane proteins (T component).

The protein localises to the cell membrane. In terms of biological role, ATP-binding (A) component of a common energy-coupling factor (ECF) ABC-transporter complex. Unlike classic ABC transporters this ECF transporter provides the energy necessary to transport a number of different substrates. This chain is Energy-coupling factor transporter ATP-binding protein EcfA1, found in Mycoplasma capricolum subsp. capricolum (strain California kid / ATCC 27343 / NCTC 10154).